Reading from the N-terminus, the 205-residue chain is Venom allergen 5 (205 aa).

Intrachain disulfides connect cysteine 4–cysteine 16, cysteine 8–cysteine 104, cysteine 28–cysteine 96, and cysteine 171–cysteine 188. Residues 47-190 form the SCP domain; that stretch reads VNEHNRFRQK…MQHHYLICNY (144 aa).

It belongs to the CRISP family. Venom allergen 5-like subfamily. Expressed by the venom gland.

The protein resides in the secreted. This is Venom allergen 5 from Polistes fuscatus (Paper wasp).